A 206-amino-acid polypeptide reads, in one-letter code: Small ribosomal subunit protein uS4 (206 aa).

The 61-residue stretch at 96–156 (GRLDNVVYRM…EKAKNQLRVK (61 aa)) folds into the S4 RNA-binding domain.

Belongs to the universal ribosomal protein uS4 family. In terms of assembly, part of the 30S ribosomal subunit. Contacts protein S5. The interaction surface between S4 and S5 is involved in control of translational fidelity.

One of the primary rRNA binding proteins, it binds directly to 16S rRNA where it nucleates assembly of the body of the 30S subunit. Functionally, with S5 and S12 plays an important role in translational accuracy. The protein is Small ribosomal subunit protein uS4 of Marinobacter nauticus (strain ATCC 700491 / DSM 11845 / VT8) (Marinobacter aquaeolei).